Consider the following 135-residue polypeptide: Meiotically up-regulated gene 116 protein (135 aa).

The chain crosses the membrane as a helical span at residues 20–39 (YFHSFHCFFLLCFTVMLCVV). A disordered region spans residues 81-101 (QTPTKKGNKTKKKRKKEKKKE). Residues 86–98 (KGNKTKKKRKKEK) are compositionally biased toward basic residues.

It is found in the mitochondrion membrane. In terms of biological role, has a role in meiosis. The polypeptide is Meiotically up-regulated gene 116 protein (mug116) (Schizosaccharomyces pombe (strain 972 / ATCC 24843) (Fission yeast)).